A 106-amino-acid polypeptide reads, in one-letter code: Iron-sulfur cluster assembly protein CyaY (106 aa).

Belongs to the frataxin family.

Involved in iron-sulfur (Fe-S) cluster assembly. May act as a regulator of Fe-S biogenesis. This Escherichia coli (strain SMS-3-5 / SECEC) protein is Iron-sulfur cluster assembly protein CyaY.